The sequence spans 465 residues: 28S rRNA (cytosine-C(5))-methyltransferase (465 aa).

G2 carries the N-acetylglycine modification. The residue at position 167 (S167) is a Phosphoserine. Residues C234–K240, D258, R263, and D305 contribute to the S-adenosyl-L-methionine site. Catalysis depends on C359, which acts as the Nucleophile. Residues T430 to T465 form a disordered region.

It belongs to the class I-like SAM-binding methyltransferase superfamily. RsmB/NOP family. In the hippocampus, specifically expressed in adult hippocampal NG2-positive oligodendrocyte precursor cells (at protein level).

It is found in the nucleus. Its subcellular location is the nucleolus. The enzyme catalyses a cytidine in 28S rRNA + S-adenosyl-L-methionine = a 5-methylcytidine in 28S rRNA + S-adenosyl-L-homocysteine + H(+). In terms of biological role, S-adenosyl-L-methionine-dependent methyltransferase that specifically methylates the C(5) position of cytosine 3438 (m5C3438) in 28S rRNA. m5C3782 promotes protein translation without affecting ribosome biogenesis and fidelity. Required for corpus callosum and cerebral cortex development. This Mus musculus (Mouse) protein is 28S rRNA (cytosine-C(5))-methyltransferase.